Reading from the N-terminus, the 499-residue chain is Cytochrome P450 76T24 (499 aa).

Residues 3-23 (VDILLSLVLAFFGWAAIYFLT) traverse the membrane as a helical segment. N-linked (GlcNAc...) asparagine glycans are attached at residues N55, N76, N279, and N284. C442 contacts heme.

It belongs to the cytochrome P450 family.

The protein localises to the membrane. The sequence is that of Cytochrome P450 76T24 from Catharanthus roseus (Madagascar periwinkle).